The following is a 316-amino-acid chain: 4-hydroxy-3-methylbut-2-enyl diphosphate reductase (316 aa).

[4Fe-4S] cluster is bound at residue C12. The (2E)-4-hydroxy-3-methylbut-2-enyl diphosphate site is built by H41 and H74. Positions 41 and 74 each coordinate dimethylallyl diphosphate. H41 and H74 together coordinate isopentenyl diphosphate. C96 contributes to the [4Fe-4S] cluster binding site. Residue H124 participates in (2E)-4-hydroxy-3-methylbut-2-enyl diphosphate binding. Residue H124 coordinates dimethylallyl diphosphate. H124 is an isopentenyl diphosphate binding site. Residue E126 is the Proton donor of the active site. T167 provides a ligand contact to (2E)-4-hydroxy-3-methylbut-2-enyl diphosphate. C197 is a binding site for [4Fe-4S] cluster. (2E)-4-hydroxy-3-methylbut-2-enyl diphosphate-binding residues include S225, S226, N227, and S269. Residues S225, S226, N227, and S269 each contribute to the dimethylallyl diphosphate site. The isopentenyl diphosphate site is built by S225, S226, N227, and S269.

This sequence belongs to the IspH family. In terms of assembly, homodimer. The cofactor is [4Fe-4S] cluster.

It carries out the reaction isopentenyl diphosphate + 2 oxidized [2Fe-2S]-[ferredoxin] + H2O = (2E)-4-hydroxy-3-methylbut-2-enyl diphosphate + 2 reduced [2Fe-2S]-[ferredoxin] + 2 H(+). The enzyme catalyses dimethylallyl diphosphate + 2 oxidized [2Fe-2S]-[ferredoxin] + H2O = (2E)-4-hydroxy-3-methylbut-2-enyl diphosphate + 2 reduced [2Fe-2S]-[ferredoxin] + 2 H(+). It participates in isoprenoid biosynthesis; dimethylallyl diphosphate biosynthesis; dimethylallyl diphosphate from (2E)-4-hydroxy-3-methylbutenyl diphosphate: step 1/1. It functions in the pathway isoprenoid biosynthesis; isopentenyl diphosphate biosynthesis via DXP pathway; isopentenyl diphosphate from 1-deoxy-D-xylulose 5-phosphate: step 6/6. Functionally, catalyzes the conversion of 1-hydroxy-2-methyl-2-(E)-butenyl 4-diphosphate (HMBPP) into a mixture of isopentenyl diphosphate (IPP) and dimethylallyl diphosphate (DMAPP). Acts in the terminal step of the DOXP/MEP pathway for isoprenoid precursor biosynthesis. The polypeptide is 4-hydroxy-3-methylbut-2-enyl diphosphate reductase (Salmonella paratyphi C (strain RKS4594)).